Consider the following 366-residue polypeptide: Ribosomal RNA large subunit methyltransferase M (366 aa).

S-adenosyl-L-methionine is bound by residues serine 188, 221-224 (CPGG), aspartate 240, aspartate 260, and aspartate 277. The active-site Proton acceptor is lysine 306.

It belongs to the class I-like SAM-binding methyltransferase superfamily. RNA methyltransferase RlmE family. RlmM subfamily. Monomer.

Its subcellular location is the cytoplasm. It carries out the reaction cytidine(2498) in 23S rRNA + S-adenosyl-L-methionine = 2'-O-methylcytidine(2498) in 23S rRNA + S-adenosyl-L-homocysteine + H(+). In terms of biological role, catalyzes the 2'-O-methylation at nucleotide C2498 in 23S rRNA. This Musicola paradisiaca (strain Ech703) (Dickeya paradisiaca) protein is Ribosomal RNA large subunit methyltransferase M.